The primary structure comprises 277 residues: MNGFASLLRRNQFILLVLFLLQIQSLGLDIDSRPTAEVCATHTISPGPKGDDGEKGDPGEEGKHGKVGRMGPKGIKGELGDMGDQGNIGKTGPIGKKGDKGEKGLLGIPGEKGKAGTVCDCGRYRKFVGQLDISIARLKTSMKFVKNVIAGIRETEEKFYYIVQEEKNYRESLTHCRIRGGMLAMPKDEAANTLIADYVAKSGFFRVFIGVNDLEREGQYMFTDNTPLQNYSNWNEGEPSDPYGHEDCVEMLSSGRWNDTECHLTMYFVCEFIKKKK.

A signal peptide spans 1-27 (MNGFASLLRRNQFILLVLFLLQIQSLG). The tract at residues 40–107 (ATHTISPGPK…GDKGEKGLLG (68 aa)) is disordered. The span at 49 to 64 (KGDDGEKGDPGEEGKH) shows a compositional bias: basic and acidic residues. Residues 53-112 (GEKGDPGEEGKHGKVGRMGPKGIKGELGDMGDQGNIGKTGPIGKKGDKGEKGLLGIPGEK) form the Collagen-like domain. Residues 155-271 (TEEKFYYIVQ…CHLTMYFVCE (117 aa)) form the C-type lectin domain. Cystine bridges form between C176/C270 and C248/C262. N258 carries N-linked (GlcNAc...) asparagine glycosylation.

The protein belongs to the COLEC10/COLEC11 family. As to expression, highly expressed in liver, placenta and adrenal gland. Moderately expressed in small intestine, lung, stomach and prostate. Weakly expressed in trachea and spleen.

It is found in the secreted. It localises to the golgi apparatus. The protein resides in the cytoplasm. In terms of biological role, lectin that binds to various sugars: galactose &gt; mannose = fucose &gt; N-acetylglucosamine &gt; N-acetylgalactosamine. Acts as a chemoattractant, probably involved in the regulation of cell migration. This is Collectin-10 (COLEC10) from Homo sapiens (Human).